The sequence spans 299 residues: tRNA uridine(34) hydroxylase (299 aa).

One can recognise a Rhodanese domain in the interval 132–226; sequence ASRPVVMLDT…YFEEVGGAHY (95 aa). The active-site Cysteine persulfide intermediate is Cys-186.

This sequence belongs to the TrhO family.

It catalyses the reaction uridine(34) in tRNA + AH2 + O2 = 5-hydroxyuridine(34) in tRNA + A + H2O. In terms of biological role, catalyzes oxygen-dependent 5-hydroxyuridine (ho5U) modification at position 34 in tRNAs. The polypeptide is tRNA uridine(34) hydroxylase (Burkholderia pseudomallei (strain K96243)).